We begin with the raw amino-acid sequence, 324 residues long: MLKAGLKSIASYIPEKILSNADLEKIVDTTDEWITRRTGIKERRIASENENSSDLGTKAALKAIERANLKPEDIDAILVATLSPDYFTMPSTACKIASNLGLVNISAFDISAACSGFIYLLEQAKALVESGLKKNVLIVGAEKTSSIMDYNDRSICILFGDGAGAGVVSLDNENHILDVHTASNGNYGDLLMTQRSQKSSLCQTLSMQMKGNEVFKIAVNTLSNDVVEILAKNNILAQEIDLFIPHQANLRIIKAVQEKLNLSDEKCVITVQKYGNTSAASIPMAMNDAYEEGRLKKGNLILLDAFGGGFTWGSALLKFGGENF.

Residues C114 and H246 contribute to the active site. The interval 247–251 is ACP-binding; it reads QANLR. The active site involves N276.

The protein belongs to the thiolase-like superfamily. FabH family. In terms of assembly, homodimer.

The protein resides in the cytoplasm. The catalysed reaction is malonyl-[ACP] + acetyl-CoA + H(+) = 3-oxobutanoyl-[ACP] + CO2 + CoA. It functions in the pathway lipid metabolism; fatty acid biosynthesis. Catalyzes the condensation reaction of fatty acid synthesis by the addition to an acyl acceptor of two carbons from malonyl-ACP. Catalyzes the first condensation reaction which initiates fatty acid synthesis and may therefore play a role in governing the total rate of fatty acid production. Possesses both acetoacetyl-ACP synthase and acetyl transacylase activities. Its substrate specificity determines the biosynthesis of branched-chain and/or straight-chain of fatty acids. This Campylobacter jejuni (strain RM1221) protein is Beta-ketoacyl-[acyl-carrier-protein] synthase III.